We begin with the raw amino-acid sequence, 975 residues long: Glycine dehydrogenase (decarboxylating) (975 aa).

An N6-(pyridoxal phosphate)lysine modification is found at Lys702.

The protein belongs to the GcvP family. The glycine cleavage system is composed of four proteins: P, T, L and H. Requires pyridoxal 5'-phosphate as cofactor.

The enzyme catalyses N(6)-[(R)-lipoyl]-L-lysyl-[glycine-cleavage complex H protein] + glycine + H(+) = N(6)-[(R)-S(8)-aminomethyldihydrolipoyl]-L-lysyl-[glycine-cleavage complex H protein] + CO2. Functionally, the glycine cleavage system catalyzes the degradation of glycine. The P protein binds the alpha-amino group of glycine through its pyridoxal phosphate cofactor; CO(2) is released and the remaining methylamine moiety is then transferred to the lipoamide cofactor of the H protein. This Xanthomonas campestris pv. campestris (strain 8004) protein is Glycine dehydrogenase (decarboxylating).